Here is a 137-residue protein sequence, read N- to C-terminus: Peptidyl-tRNA hydrolase ArfB (137 aa).

Positions 102 to 137 (EKKRRPTKPTLGSKTRRLEGKARRSTVKAGRGKVDF) are disordered.

The protein belongs to the prokaryotic/mitochondrial release factor family. Associated with 70S ribosomes and polysomes.

The protein resides in the cytoplasm. It catalyses the reaction an N-acyl-L-alpha-aminoacyl-tRNA + H2O = an N-acyl-L-amino acid + a tRNA + H(+). Its function is as follows. Rescues stalled ribosomes. Can hydrolyze peptidyl-tRNA on ribosomes stalled by both non-stop mRNAs and mRNAs that contain rare codon clusters. The polypeptide is Peptidyl-tRNA hydrolase ArfB (arfB) (Pseudomonas putida (Arthrobacter siderocapsulatus)).